The following is a 107-amino-acid chain: MYAIIETGGKQYKVSEGDTIAVEKLSVKQGEQIVFERILHLSTDGTVKIGQPYVEGCTVKGTVLSHERARKVVVVKYRPRKNYRRERGHRQWFSLVKIDKIEIEKTS.

Belongs to the bacterial ribosomal protein bL21 family. Part of the 50S ribosomal subunit. Contacts protein L20.

In terms of biological role, this protein binds to 23S rRNA in the presence of protein L20. This chain is Large ribosomal subunit protein bL21, found in Pseudothermotoga lettingae (strain ATCC BAA-301 / DSM 14385 / NBRC 107922 / TMO) (Thermotoga lettingae).